We begin with the raw amino-acid sequence, 382 residues long: 1-deoxy-D-xylulose 5-phosphate reductoisomerase (382 aa).

Residues Thr-10, Gly-11, Ser-12, Ile-13, Gly-36, and Asn-122 each contribute to the NADPH site. Lys-123 provides a ligand contact to 1-deoxy-D-xylulose 5-phosphate. Glu-124 provides a ligand contact to NADPH. Asp-148 is a Mn(2+) binding site. 1-deoxy-D-xylulose 5-phosphate contacts are provided by Ser-149, Glu-150, Ser-174, and His-197. Glu-150 lines the Mn(2+) pocket. Gly-203 contributes to the NADPH binding site. The 1-deoxy-D-xylulose 5-phosphate site is built by Ser-210, Asn-215, Lys-216, and Glu-219. Glu-219 is a Mn(2+) binding site.

Belongs to the DXR family. Mg(2+) is required as a cofactor. It depends on Mn(2+) as a cofactor.

The catalysed reaction is 2-C-methyl-D-erythritol 4-phosphate + NADP(+) = 1-deoxy-D-xylulose 5-phosphate + NADPH + H(+). Its pathway is isoprenoid biosynthesis; isopentenyl diphosphate biosynthesis via DXP pathway; isopentenyl diphosphate from 1-deoxy-D-xylulose 5-phosphate: step 1/6. Catalyzes the NADPH-dependent rearrangement and reduction of 1-deoxy-D-xylulose-5-phosphate (DXP) to 2-C-methyl-D-erythritol 4-phosphate (MEP). The sequence is that of 1-deoxy-D-xylulose 5-phosphate reductoisomerase from Chlorobium limicola (strain DSM 245 / NBRC 103803 / 6330).